The following is a 213-amino-acid chain: Holliday junction branch migration complex subunit RuvA (213 aa).

Residues 1–64 form a domain I region; sequence MIARLVGFLV…EDSITLFGFA (64 aa). The tract at residues 65 to 143 is domain II; it reads SYLERDWFRL…AIALFSSAKG (79 aa). Residues 144–159 are flexible linker; the sequence is DHLAVEDISQPAASAH. The segment at 160–213 is domain III; it reads HAGNFMADAVSALLNLGFKPAEAQRVVQLASEELGDQATLDSLVRLALRLSSKH.

It belongs to the RuvA family. Homotetramer. Forms an RuvA(8)-RuvB(12)-Holliday junction (HJ) complex. HJ DNA is sandwiched between 2 RuvA tetramers; dsDNA enters through RuvA and exits via RuvB. An RuvB hexamer assembles on each DNA strand where it exits the tetramer. Each RuvB hexamer is contacted by two RuvA subunits (via domain III) on 2 adjacent RuvB subunits; this complex drives branch migration. In the full resolvosome a probable DNA-RuvA(4)-RuvB(12)-RuvC(2) complex forms which resolves the HJ.

Its subcellular location is the cytoplasm. Its function is as follows. The RuvA-RuvB-RuvC complex processes Holliday junction (HJ) DNA during genetic recombination and DNA repair, while the RuvA-RuvB complex plays an important role in the rescue of blocked DNA replication forks via replication fork reversal (RFR). RuvA specifically binds to HJ cruciform DNA, conferring on it an open structure. The RuvB hexamer acts as an ATP-dependent pump, pulling dsDNA into and through the RuvAB complex. HJ branch migration allows RuvC to scan DNA until it finds its consensus sequence, where it cleaves and resolves the cruciform DNA. The sequence is that of Holliday junction branch migration complex subunit RuvA from Zymomonas mobilis subsp. mobilis (strain ATCC 31821 / ZM4 / CP4).